The following is a 327-amino-acid chain: Phenylalanine--tRNA ligase alpha subunit (327 aa).

Glu252 contacts Mg(2+).

The protein belongs to the class-II aminoacyl-tRNA synthetase family. Phe-tRNA synthetase alpha subunit type 1 subfamily. In terms of assembly, tetramer of two alpha and two beta subunits. Mg(2+) serves as cofactor.

The protein resides in the cytoplasm. The catalysed reaction is tRNA(Phe) + L-phenylalanine + ATP = L-phenylalanyl-tRNA(Phe) + AMP + diphosphate + H(+). The sequence is that of Phenylalanine--tRNA ligase alpha subunit from Shigella boydii serotype 18 (strain CDC 3083-94 / BS512).